Reading from the N-terminus, the 473-residue chain is Serine palmitoyltransferase 1 (473 aa).

Topologically, residues 1-15 are lumenal; sequence MATATEQWVLVEMVQ. Residues 1–66 form an interaction with SPTLC2 region; sequence MATATEQWVL…KEELIEEWQP (66 aa). The helical transmembrane segment at 16–36 threads the bilayer; it reads ALYEAPAYHLILEGILILWII. Residues 37-473 lie on the Cytoplasmic side of the membrane; that stretch reads RLLFSKTYKL…IKEVAQAVLL (437 aa). A Phosphotyrosine; by ABL modification is found at Tyr-164.

It belongs to the class-II pyridoxal-phosphate-dependent aminotransferase family. In terms of assembly, component of the serine palmitoyltransferase (SPT) complex, which is also composed of SPTLC2 or SPTLC3 and SPTSSA or SPTSSB. The heterodimer consisting of SPTLC1 and SPTLC2/SPTLC3 forms the catalytic core of the enzyme, while SPTSSA or SPTSSB subunits determine substrate specificity. SPT also interacts with ORMDL proteins, especially ORMDL3, which negatively regulate SPT activity in the presence of ceramides. Forms dimers of heterodimers with SPTLC2. Interacts with RTN4 (isoform B). Pyridoxal 5'-phosphate is required as a cofactor. In terms of processing, phosphorylation at Tyr-164 inhibits activity and promotes cell survival. In terms of tissue distribution, widely expressed. Not detected in small intestine.

It is found in the endoplasmic reticulum membrane. It catalyses the reaction L-serine + hexadecanoyl-CoA + H(+) = 3-oxosphinganine + CO2 + CoA. It carries out the reaction octadecanoyl-CoA + L-serine + H(+) = 3-oxoeicosasphinganine + CO2 + CoA. The enzyme catalyses tetradecanoyl-CoA + L-serine + H(+) = 3-oxohexadecasphinganine + CO2 + CoA. The catalysed reaction is dodecanoyl-CoA + L-serine + H(+) = 3-oxotetradecasphinganine + CO2 + CoA. It functions in the pathway lipid metabolism; sphingolipid metabolism. SPT complex catalytic activity is negatively regulated by ORMDL proteins, including ORMDL3, in the presence of ceramides. This mechanism allows to maintain ceramide levels at sufficient concentrations for the production of complex sphingolipids, but which prevents the accumulation of ceramides to levels that trigger apoptosis. Its function is as follows. Component of the serine palmitoyltransferase multisubunit enzyme (SPT) that catalyzes the initial and rate-limiting step in sphingolipid biosynthesis by condensing L-serine and activated acyl-CoA (most commonly palmitoyl-CoA) to form long-chain bases. The SPT complex is also composed of SPTLC2 or SPTLC3 and SPTSSA or SPTSSB. Within this complex, the heterodimer with SPTLC2 or SPTLC3 forms the catalytic core. The composition of the serine palmitoyltransferase (SPT) complex determines the substrate preference. The SPTLC1-SPTLC2-SPTSSA complex shows a strong preference for C16-CoA substrate, while the SPTLC1-SPTLC3-SPTSSA isozyme uses both C14-CoA and C16-CoA as substrates, with a slight preference for C14-CoA. The SPTLC1-SPTLC2-SPTSSB complex shows a strong preference for C18-CoA substrate, while the SPTLC1-SPTLC3-SPTSSB isozyme displays an ability to use a broader range of acyl-CoAs, without apparent preference. Required for adipocyte cell viability and metabolic homeostasis. The protein is Serine palmitoyltransferase 1 (SPTLC1) of Homo sapiens (Human).